The primary structure comprises 364 residues: Fructose-bisphosphate aldolase A (364 aa).

Residue Y5 is modified to Phosphotyrosine. Residue T9 is modified to Phosphothreonine. A phosphoserine mark is found at S36 and S39. An N6-acetyllysine; alternate modification is found at K42. K42 participates in a covalent cross-link: Glycyl lysine isopeptide (Lys-Gly) (interchain with G-Cter in SUMO1); alternate. A Glycyl lysine isopeptide (Lys-Gly) (interchain with G-Cter in SUMO2); alternate cross-link involves residue K42. R43 is a beta-D-fructose 1,6-bisphosphate binding site. S46 carries the post-translational modification Phosphoserine. K99 is subject to N6-(2-hydroxyisobutyryl)lysine. N6-acetyllysine is present on K108. At K111 the chain carries N6-acetyllysine; alternate. Residue K111 is modified to N6-malonyllysine; alternate. Residue S132 is modified to Phosphoserine. K147 is subject to N6-(2-hydroxyisobutyryl)lysine. E188 (proton acceptor) is an active-site residue. K230 serves as the catalytic Schiff-base intermediate with dihydroxyacetone-P. A Phosphoserine modification is found at S272. Beta-D-fructose 1,6-bisphosphate is bound by residues 272–274 (SGG), S301, and R304. Residue K312 is modified to N6-malonyllysine. K330 carries the N6-acetyllysine modification.

It belongs to the class I fructose-bisphosphate aldolase family. Homotetramer. Interacts with SNX9 and WAS. Interacts with FBP2; the interaction blocks FBP2 inhibition by physiological concentrations of AMP and reduces inhibition by Ca(2+).

The protein localises to the cytoplasm. It is found in the myofibril. Its subcellular location is the sarcomere. The protein resides in the i band. It localises to the m line. The enzyme catalyses beta-D-fructose 1,6-bisphosphate = D-glyceraldehyde 3-phosphate + dihydroxyacetone phosphate. Its pathway is carbohydrate degradation; glycolysis; D-glyceraldehyde 3-phosphate and glycerone phosphate from D-glucose: step 4/4. In terms of biological role, catalyzes the reversible conversion of beta-D-fructose 1,6-bisphosphate (FBP) into two triose phosphate and plays a key role in glycolysis and gluconeogenesis. In addition, may also function as scaffolding protein. The sequence is that of Fructose-bisphosphate aldolase A (ALDOA) from Pan troglodytes (Chimpanzee).